The sequence spans 206 residues: Pyrrolidone-carboxylate peptidase 2 (206 aa).

Residues Glu78, Cys141, and His165 contribute to the active site.

This sequence belongs to the peptidase C15 family. Homotetramer.

Its subcellular location is the cytoplasm. It carries out the reaction Release of an N-terminal pyroglutamyl group from a polypeptide, the second amino acid generally not being Pro.. In terms of biological role, removes 5-oxoproline from various penultimate amino acid residues except L-proline. The polypeptide is Pyrrolidone-carboxylate peptidase 2 (Caldanaerobacter subterraneus subsp. tengcongensis (strain DSM 15242 / JCM 11007 / NBRC 100824 / MB4) (Thermoanaerobacter tengcongensis)).